A 155-amino-acid polypeptide reads, in one-letter code: Ciliary microtubule inner protein 2C (155 aa).

It belongs to the CIMIP2 family.

It is found in the cytoplasm. The protein resides in the cytoskeleton. Its subcellular location is the cilium axoneme. Microtubule inner protein (MIP) part of the dynein-decorated doublet microtubules (DMTs) in cilia axoneme, which is required for motile cilia beating. This Xenopus laevis (African clawed frog) protein is Ciliary microtubule inner protein 2C (cimip2cb).